Reading from the N-terminus, the 148-residue chain is Small ribosomal subunit protein uS12 (148 aa).

Belongs to the universal ribosomal protein uS12 family. Part of the 30S ribosomal subunit.

Functionally, with S4 and S5 plays an important role in translational accuracy. Located at the interface of the 30S and 50S subunits. The polypeptide is Small ribosomal subunit protein uS12 (Methanocaldococcus jannaschii (strain ATCC 43067 / DSM 2661 / JAL-1 / JCM 10045 / NBRC 100440) (Methanococcus jannaschii)).